Here is a 235-residue protein sequence, read N- to C-terminus: Phosphoribosylaminoimidazole-succinocarboxamide synthase (235 aa).

This sequence belongs to the SAICAR synthetase family.

The enzyme catalyses 5-amino-1-(5-phospho-D-ribosyl)imidazole-4-carboxylate + L-aspartate + ATP = (2S)-2-[5-amino-1-(5-phospho-beta-D-ribosyl)imidazole-4-carboxamido]succinate + ADP + phosphate + 2 H(+). The protein operates within purine metabolism; IMP biosynthesis via de novo pathway; 5-amino-1-(5-phospho-D-ribosyl)imidazole-4-carboxamide from 5-amino-1-(5-phospho-D-ribosyl)imidazole-4-carboxylate: step 1/2. This Chlorobaculum tepidum (strain ATCC 49652 / DSM 12025 / NBRC 103806 / TLS) (Chlorobium tepidum) protein is Phosphoribosylaminoimidazole-succinocarboxamide synthase.